Consider the following 170-residue polypeptide: Lipoprotein signal peptidase (170 aa).

4 helical membrane passes run 11 to 31, 41 to 61, 69 to 89, and 95 to 115; these read LGWLWLSVLVLVIDQVSKLHF, IVVIPDYFSWTLAYNTGAAFS, WQRWLFALIAIAVSAVLVVWL, and NETWLAIALALVLGGALGNLY. Active-site residues include Asp-125 and Asp-144. A helical membrane pass occupies residues 136-156; sequence YFPAFNFADSAITVGAVMLAL.

This sequence belongs to the peptidase A8 family.

Its subcellular location is the cell inner membrane. The enzyme catalyses Release of signal peptides from bacterial membrane prolipoproteins. Hydrolyzes -Xaa-Yaa-Zaa-|-(S,diacylglyceryl)Cys-, in which Xaa is hydrophobic (preferably Leu), and Yaa (Ala or Ser) and Zaa (Gly or Ala) have small, neutral side chains.. Its pathway is protein modification; lipoprotein biosynthesis (signal peptide cleavage). This protein specifically catalyzes the removal of signal peptides from prolipoproteins. The protein is Lipoprotein signal peptidase of Pseudomonas fluorescens (strain ATCC BAA-477 / NRRL B-23932 / Pf-5).